A 422-amino-acid polypeptide reads, in one-letter code: 5-hydroxytryptamine receptor 1A (422 aa).

At methionine 1 to isoleucine 38 the chain is on the extracellular side. N-linked (GlcNAc...) asparagine glycosylation is found at asparagine 10, asparagine 11, and asparagine 24. The chain crosses the membrane as a helical span at residues threonine 39–alanine 59. Residues alanine 60–tyrosine 73 lie on the Cytoplasmic side of the membrane. Residues leucine 74–valine 98 traverse the membrane as a helical segment. Topologically, residues leucine 99 to valine 107 are extracellular. A helical transmembrane segment spans residues threonine 108–leucine 132. Cysteines 109 and 187 form a disulfide. 2 residues coordinate serotonin: aspartate 116 and cysteine 120. The short motif at aspartate 133 to tyrosine 135 is the DRY motif; important for ligand-induced conformation changes element. Topologically, residues aspartate 133–arginine 152 are cytoplasmic. Residues alanine 153–glycine 174 form a helical membrane-spanning segment. Residues tryptophan 175–histidine 193 lie on the Extracellular side of the membrane. The helical transmembrane segment at glycine 194 to glycine 216 threads the bilayer. At arginine 217–threonine 346 the chain is on the cytoplasmic side. The disordered stretch occupies residues glycine 237–glutamate 262. 1D-myo-inositol 4-phosphate is bound by residues lysine 345, threonine 346, and glycine 352. A helical membrane pass occupies residues leucine 347–phenylalanine 370. The Extracellular portion of the chain corresponds to cysteine 371–proline 378. Residues threonine 379–phenylalanine 403 traverse the membrane as a helical segment. The short motif at asparagine 396 to tyrosine 400 is the NPxxY motif; important for ligand-induced conformation changes and signaling element. The 1D-myo-inositol 4-phosphate site is built by phenylalanine 403, asparagine 404, and lysine 405. Residues asparagine 404–arginine 422 lie on the Cytoplasmic side of the membrane.

This sequence belongs to the G-protein coupled receptor 1 family. 5-hydroxytryptamine receptor subfamily. HTR1A sub-subfamily. Heterodimer; heterodimerizes with GPER1. Interacts with YIF1B. Interacts with GPR39 and GALR1.

Its subcellular location is the cell membrane. The protein localises to the cell projection. The protein resides in the dendrite. G-protein coupled receptor activity is regulated by lipids: phosphatidylinositol 4-phosphate increases HTR1A-mediated activity. Its function is as follows. G-protein coupled receptor for 5-hydroxytryptamine (serotonin). Also functions as a receptor for various drugs and psychoactive substances. Ligand binding causes a conformation change that triggers signaling via guanine nucleotide-binding proteins (G proteins) and modulates the activity of downstream effectors, such as adenylate cyclase. HTR1A is coupled to G(i)/G(o) G alpha proteins and mediates inhibitory neurotransmission: signaling inhibits adenylate cyclase activity and activates a phosphatidylinositol-calcium second messenger system that regulates the release of Ca(2+) ions from intracellular stores. Beta-arrestin family members regulate signaling by mediating both receptor desensitization and resensitization processes. The chain is 5-hydroxytryptamine receptor 1A (HTR1A) from Equus caballus (Horse).